Here is a 267-residue protein sequence, read N- to C-terminus: Tryptophan synthase alpha chain (267 aa).

Catalysis depends on proton acceptor residues Glu-47 and Asp-58.

The protein belongs to the TrpA family. Tetramer of two alpha and two beta chains.

It catalyses the reaction (1S,2R)-1-C-(indol-3-yl)glycerol 3-phosphate + L-serine = D-glyceraldehyde 3-phosphate + L-tryptophan + H2O. It participates in amino-acid biosynthesis; L-tryptophan biosynthesis; L-tryptophan from chorismate: step 5/5. Functionally, the alpha subunit is responsible for the aldol cleavage of indoleglycerol phosphate to indole and glyceraldehyde 3-phosphate. The chain is Tryptophan synthase alpha chain from Chlorobaculum parvum (strain DSM 263 / NCIMB 8327) (Chlorobium vibrioforme subsp. thiosulfatophilum).